A 293-amino-acid polypeptide reads, in one-letter code: ATP synthase gamma chain (293 aa).

Belongs to the ATPase gamma chain family. As to quaternary structure, F-type ATPases have 2 components, CF(1) - the catalytic core - and CF(0) - the membrane proton channel. CF(1) has five subunits: alpha(3), beta(3), gamma(1), delta(1), epsilon(1). CF(0) has three main subunits: a, b and c.

It is found in the cell inner membrane. Produces ATP from ADP in the presence of a proton gradient across the membrane. The gamma chain is believed to be important in regulating ATPase activity and the flow of protons through the CF(0) complex. This chain is ATP synthase gamma chain, found in Allorhizobium ampelinum (strain ATCC BAA-846 / DSM 112012 / S4) (Agrobacterium vitis (strain S4)).